Reading from the N-terminus, the 478-residue chain is Aspartyl/glutamyl-tRNA(Asn/Gln) amidotransferase subunit B (478 aa).

This sequence belongs to the GatB/GatE family. GatB subfamily. Heterotrimer of A, B and C subunits.

It carries out the reaction L-glutamyl-tRNA(Gln) + L-glutamine + ATP + H2O = L-glutaminyl-tRNA(Gln) + L-glutamate + ADP + phosphate + H(+). The catalysed reaction is L-aspartyl-tRNA(Asn) + L-glutamine + ATP + H2O = L-asparaginyl-tRNA(Asn) + L-glutamate + ADP + phosphate + 2 H(+). Its function is as follows. Allows the formation of correctly charged Asn-tRNA(Asn) or Gln-tRNA(Gln) through the transamidation of misacylated Asp-tRNA(Asn) or Glu-tRNA(Gln) in organisms which lack either or both of asparaginyl-tRNA or glutaminyl-tRNA synthetases. The reaction takes place in the presence of glutamine and ATP through an activated phospho-Asp-tRNA(Asn) or phospho-Glu-tRNA(Gln). In Lachnoclostridium phytofermentans (strain ATCC 700394 / DSM 18823 / ISDg) (Clostridium phytofermentans), this protein is Aspartyl/glutamyl-tRNA(Asn/Gln) amidotransferase subunit B.